Reading from the N-terminus, the 57-residue chain is UPF0391 membrane protein RPC_3278 (57 aa).

2 consecutive transmembrane segments (helical) span residues Trp4–Ala24 and Ile30–Leu50.

Belongs to the UPF0391 family.

Its subcellular location is the cell membrane. The polypeptide is UPF0391 membrane protein RPC_3278 (Rhodopseudomonas palustris (strain BisB18)).